Consider the following 955-residue polypeptide: Histone deacetylase 6 (955 aa).

Histone deacetylase regions lie at residues 15–337 and 425–749; these read TLIG…YAPF and METL…VLQN. His-146 functions as the 1 in the catalytic mechanism. His-561 (2) is an active-site residue. The tract at residues 815–840 is disordered; that stretch reads SIDMADQSSSSGSSSSSTRPSHNLEI. Over residues 818–831 the composition is skewed to low complexity; that stretch reads MADQSSSSGSSSSS. Residues 853-951 form a UBP-type zinc finger; it reads ATCPHLKEVK…SAAHESKFGE (99 aa). Positions 855, 857, 875, 878, 887, 890, and 895 each coordinate Zn(2+). Residues 896–898 are ubiquitin binding; sequence GRF. Residues His-902, His-906, His-912, Cys-925, and Cys-928 each contribute to the Zn(2+) site. Residues 924 to 931 are ubiquitin binding; sequence WCYPCDSY.

The protein belongs to the histone deacetylase family. HD type 2 subfamily. Zn(2+) is required as a cofactor.

It localises to the nucleus. The catalysed reaction is N(6)-acetyl-L-lysyl-[histone] + H2O = L-lysyl-[histone] + acetate. Functionally, probable histone deacetylase. Histone deacetylases are responsible for the deacetylation of lysine residues on the N-terminal part of the core histones (H2A, H2B, H3 and H4). Histone deacetylation gives a tag for epigenetic repression and plays an important role in transcriptional regulation, cell cycle progression and developmental events. Histone deacetylases act via the formation of large multiprotein complexes. The protein is Histone deacetylase 6 (hda-6) of Caenorhabditis elegans.